A 417-amino-acid polypeptide reads, in one-letter code: UDP-N-acetylglucosamine 1-carboxyvinyltransferase (417 aa).

Phosphoenolpyruvate is bound at residue 22–23 (KN). Arg93 is a UDP-N-acetyl-alpha-D-glucosamine binding site. Cys117 acts as the Proton donor in catalysis. Residue Cys117 is modified to 2-(S-cysteinyl)pyruvic acid O-phosphothioketal. UDP-N-acetyl-alpha-D-glucosamine-binding positions include 122 to 126 (RPVDQ), Asp304, and Ile326.

This sequence belongs to the EPSP synthase family. MurA subfamily.

Its subcellular location is the cytoplasm. The enzyme catalyses phosphoenolpyruvate + UDP-N-acetyl-alpha-D-glucosamine = UDP-N-acetyl-3-O-(1-carboxyvinyl)-alpha-D-glucosamine + phosphate. It participates in cell wall biogenesis; peptidoglycan biosynthesis. Its function is as follows. Cell wall formation. Adds enolpyruvyl to UDP-N-acetylglucosamine. This chain is UDP-N-acetylglucosamine 1-carboxyvinyltransferase, found in Neisseria meningitidis serogroup A / serotype 4A (strain DSM 15465 / Z2491).